The sequence spans 320 residues: Mycothiol acetyltransferase (320 aa).

N-acetyltransferase domains lie at 8 to 141 and 152 to 320; these read SHLT…RSLR and LQIR…AALA. Glu-36 lines the 1D-myo-inositol 2-(L-cysteinylamino)-2-deoxy-alpha-D-glucopyranoside pocket. Acetyl-CoA-binding positions include 80 to 82 and 88 to 93; these read LVV and RRGIAT. Residues Glu-179, Lys-229, and Glu-239 each coordinate 1D-myo-inositol 2-(L-cysteinylamino)-2-deoxy-alpha-D-glucopyranoside. Residues 243–245 and 250–256 contribute to the acetyl-CoA site; these read LGV and QGRGLGR. Tyr-284 contacts 1D-myo-inositol 2-(L-cysteinylamino)-2-deoxy-alpha-D-glucopyranoside. 289–294 is an acetyl-CoA binding site; that stretch reads NIAAVR.

The protein belongs to the acetyltransferase family. MshD subfamily. As to quaternary structure, monomer.

It catalyses the reaction 1D-myo-inositol 2-(L-cysteinylamino)-2-deoxy-alpha-D-glucopyranoside + acetyl-CoA = mycothiol + CoA + H(+). Functionally, catalyzes the transfer of acetyl from acetyl-CoA to desacetylmycothiol (Cys-GlcN-Ins) to form mycothiol. The protein is Mycothiol acetyltransferase of Mycobacterium ulcerans (strain Agy99).